A 130-amino-acid chain; its full sequence is Small ribosomal subunit protein uS9 (130 aa).

Belongs to the universal ribosomal protein uS9 family.

The sequence is that of Small ribosomal subunit protein uS9 from Verminephrobacter eiseniae (strain EF01-2).